The chain runs to 95 residues: MRCVTSFVVLCILMFLVVNNVKVDVKAQRRKPVCKLTGVLNPGKCPTAIHDASNLCSRKLASPNMTFKRCDCQNTEWRGKDHYQCTCYIKLPCNQ.

Residues methionine 1–alanine 27 form the signal peptide. Disulfide bonds link cysteine 34–cysteine 93, cysteine 45–cysteine 72, cysteine 56–cysteine 85, and cysteine 70–cysteine 87.

Belongs to the DEFL family.

The protein resides in the secreted. The polypeptide is Putative defensin-like protein 252 (SCRL13) (Arabidopsis thaliana (Mouse-ear cress)).